The chain runs to 279 residues: Phosphate import ATP-binding protein PstB 1 (279 aa).

The 249-residue stretch at 26–274 folds into the ABC transporter domain; that stretch reads VMDCKLDKIF…PREQLTSDYI (249 aa). 59-66 is a binding site for ATP; it reads GPSGCGKS.

Belongs to the ABC transporter superfamily. Phosphate importer (TC 3.A.1.7) family. In terms of assembly, the complex is composed of two ATP-binding proteins (PstB), two transmembrane proteins (PstC and PstA) and a solute-binding protein (PstS).

Its subcellular location is the cell inner membrane. It catalyses the reaction phosphate(out) + ATP + H2O = ADP + 2 phosphate(in) + H(+). In terms of biological role, part of the ABC transporter complex PstSACB involved in phosphate import. Responsible for energy coupling to the transport system. The polypeptide is Phosphate import ATP-binding protein PstB 1 (Pseudomonas putida (strain ATCC 47054 / DSM 6125 / CFBP 8728 / NCIMB 11950 / KT2440)).